We begin with the raw amino-acid sequence, 186 residues long: MMIILASSSPRRREILGRFFEIKVYPANVEERSTVKDSREKSLDIARKKALSVSSKFPGATIVAADTMVIFRGKTLGKPRNAEEARKMLRALSGNVHKVITGYCIIHNGRIIEGVEETEVKFREIGDELLEWYISTGEWKDKAGAYGIQGYASIFVEWIKGDYYNVVGLPIKVVVELTKLGFKPKR.

Asp-66 functions as the Proton acceptor in the catalytic mechanism.

It belongs to the Maf family. YhdE subfamily. It depends on a divalent metal cation as a cofactor.

The protein resides in the cytoplasm. It catalyses the reaction dTTP + H2O = dTMP + diphosphate + H(+). It carries out the reaction UTP + H2O = UMP + diphosphate + H(+). In terms of biological role, nucleoside triphosphate pyrophosphatase that hydrolyzes dTTP and UTP. May have a dual role in cell division arrest and in preventing the incorporation of modified nucleotides into cellular nucleic acids. This chain is dTTP/UTP pyrophosphatase, found in Pyrococcus horikoshii (strain ATCC 700860 / DSM 12428 / JCM 9974 / NBRC 100139 / OT-3).